Reading from the N-terminus, the 88-residue chain is Large ribosomal subunit protein bL31B (88 aa).

This sequence belongs to the bacterial ribosomal protein bL31 family. Type B subfamily. In terms of assembly, part of the 50S ribosomal subunit.

The polypeptide is Large ribosomal subunit protein bL31B (Bordetella pertussis (strain Tohama I / ATCC BAA-589 / NCTC 13251)).